Consider the following 297-residue polypeptide: Alpha-tubulin N-acetyltransferase 1 (297 aa).

The 186-residue stretch at 1–186 (MEFDFDVHKI…NNFVVFDGFF (186 aa)) folds into the N-acetyltransferase domain. Acetyl-CoA-binding positions include 120 to 133 (FYIH…GFGK) and 156 to 165 (SEKFLSFLRK). The segment at 269–297 (LHRTANSEQEDHSQRRRTSSLNRPQSIHH) is disordered. Residues 287-297 (SSLNRPQSIHH) are compositionally biased toward polar residues.

This sequence belongs to the acetyltransferase ATAT1 family.

It localises to the cytoplasm. It is found in the membrane. The protein resides in the clathrin-coated pit. Its subcellular location is the cell junction. The protein localises to the focal adhesion. It localises to the cell projection. It is found in the axon. The protein resides in the cytoskeleton. Its subcellular location is the spindle. It catalyses the reaction L-lysyl-[alpha-tubulin] + acetyl-CoA = N(6)-acetyl-L-lysyl-[alpha-tubulin] + CoA + H(+). Its function is as follows. Specifically acetylates 'Lys-40' in alpha-tubulin on the lumenal side of microtubules. Promotes microtubule destabilization and accelerates microtubule dynamics; this activity may be independent of acetylation activity. Acetylates alpha-tubulin with a slow enzymatic rate, due to a catalytic site that is not optimized for acetyl transfer. Enters the microtubule through each end and diffuses quickly throughout the lumen of microtubules. Acetylates only long/old microtubules because of its slow acetylation rate since it does not have time to act on dynamically unstable microtubules before the enzyme is released. May be involved in neuron development. The chain is Alpha-tubulin N-acetyltransferase 1 from Xenopus tropicalis (Western clawed frog).